Here is a 218-residue protein sequence, read N- to C-terminus: Recombination protein RecR (218 aa).

Residues 56–71 (CRICCNISREEVCRIC) form a C4-type zinc finger. Residues 79 to 195 (STICVVEEPK…VVSRLASGMP (117 aa)) form the Toprim domain.

This sequence belongs to the RecR family.

Functionally, may play a role in DNA repair. It seems to be involved in an RecBC-independent recombinational process of DNA repair. It may act with RecF and RecO. The protein is Recombination protein RecR of Corynebacterium diphtheriae (strain ATCC 700971 / NCTC 13129 / Biotype gravis).